A 181-amino-acid chain; its full sequence is UPF0302 protein LMHCC_0635 (181 aa).

This sequence belongs to the UPF0302 family.

In Listeria monocytogenes serotype 4a (strain HCC23), this protein is UPF0302 protein LMHCC_0635.